A 125-amino-acid polypeptide reads, in one-letter code: MIVMSLTNEQIIEAIASKSVSEIVELISAMEEKFGVSAAAVAAAAPAAGAAAAEEKTEFDVVLKAAGANKVAVIKAVRGATGLGLKEAKDLVESAPANLKEGVSKEEAESLKKELEAAGAEVEIK.

This sequence belongs to the bacterial ribosomal protein bL12 family. Homodimer. Part of the ribosomal stalk of the 50S ribosomal subunit. Forms a multimeric L10(L12)X complex, where L10 forms an elongated spine to which 2 to 4 L12 dimers bind in a sequential fashion. Binds GTP-bound translation factors.

In terms of biological role, forms part of the ribosomal stalk which helps the ribosome interact with GTP-bound translation factors. Is thus essential for accurate translation. The protein is Large ribosomal subunit protein bL12 of Mannheimia succiniciproducens (strain KCTC 0769BP / MBEL55E).